The primary structure comprises 283 residues: Elongation factor Ts (283 aa).

Residues 84–87 form an involved in Mg(2+) ion dislocation from EF-Tu region; that stretch reads TDFV.

The protein belongs to the EF-Ts family.

It localises to the cytoplasm. Functionally, associates with the EF-Tu.GDP complex and induces the exchange of GDP to GTP. It remains bound to the aminoacyl-tRNA.EF-Tu.GTP complex up to the GTP hydrolysis stage on the ribosome. The chain is Elongation factor Ts from Bifidobacterium longum (strain DJO10A).